A 55-amino-acid chain; its full sequence is Large ribosomal subunit protein bL33 (55 aa).

The protein belongs to the bacterial ribosomal protein bL33 family.

This chain is Large ribosomal subunit protein bL33, found in Escherichia coli (strain K12 / DH10B).